Reading from the N-terminus, the 650-residue chain is Epithelial sodium channel subunit gamma (650 aa).

At 1 to 55 (MAPGEKIKAKIKKNLPVRGPQAPTIKDLMHWYCMNTNTHGCRRIVVSRGRLRRLL) the chain is on the cytoplasmic side. A helical transmembrane segment spans residues 56 to 76 (WIAFTLTAVALIIWQCALLVF). The Extracellular segment spans residues 77–542 (SFYTVSVSIK…GGQLGLWMSC (466 aa)). Intrachain disulfides connect Cys-100-Cys-284, Cys-208-Cys-215, Cys-261-Cys-268, Cys-373-Cys-458, Cys-395-Cys-454, Cys-399-Cys-450, Cys-408-Cys-435, and Cys-410-Cys-424. Positions 135–222 (RKRREAGSMP…SDCATYTFSS (88 aa)) are gating release of inhibition by proteolysis (GRIP); protease-sensitive region that is responsible for the proteolytic activation of the channel. Residue Asn-210 is glycosylated (N-linked (GlcNAc...) asparagine). The N-linked (GlcNAc...) asparagine glycan is linked to Asn-272. Asn-498 is a glycosylation site (N-linked (GlcNAc...) asparagine). The helical transmembrane segment at 543-563 (SVVCVIEIIEVFFIDFFSIIA) threads the bilayer. The Cytoplasmic portion of the chain corresponds to 564–650 (RRQWHKAKDW…LTDTQLTNEL (87 aa)). Residues 577–628 (RQTPPSTETPSSRQGQDNPALDTDDDLPTFTSAMRLPPAPGSTVPGTPPPRY) form a disordered region. Residues 579–593 (TPPSTETPSSRQGQD) are compositionally biased toward polar residues. Residues 624–628 (PPPRY) carry the PY motif; mediates interaction, ubiquitination and inhibition by NEDD4 and NEDD4L motif. The short motif at 624–628 (PPPRY) is the PY motif; recruits WW domain-containing proteins and is thereby required for ubiquitination and inhibition of the channel by NEDD4 and NEDD4L element.

It belongs to the amiloride-sensitive sodium channel (TC 1.A.6) family. SCNN1G subfamily. In terms of assembly, component of the heterotrimeric epithelial sodium channel (ENaC) composed of an alpha/SCNN1A, a beta/SCNN1B and a gamma/SCNN1G subunit. Interacts with WWP1 (via WW domains). Interacts with WWP2 (via WW domains); inhibits the channel. Interacts with the full-length immature form of PCSK9 (pro-PCSK9); inhibits ENaC by promoting its proteasomal degradation. Interacts with BPIFA1; the interaction is indirect via SCNN1B and inhibits the proteolytic maturation of SCNN1A and SCNN1G and the activation of ENaC. Phosphorylated on serine and threonine residues. Aldosterone and insulin increase the basal level of phosphorylation. In terms of processing, ubiquitinated. Can be ubiquitinated at multiple sites and undergo monoubiquitination and polyubiquitination. Ubiquitination by NEDD4 or NEDD4L inhibits the ENaC channel through endocytosis, intracellular retention and degradation of its individual subunits. Post-translationally, ENaC is activated through the proteolytic maturation of its subunits. Furin cleaves the SCNN1G subunit first, followed by cleavage by prostasin (PRSS8), which results in a stepwise increase in the open probability of the channel due to the release of an inhibitory tract. BPIFA1, which is recruited by the SCNN1B subunit, prevents the proteolytic activation of ENaC. N-glycosylated. N-linked glycans are processed to complex type during ENaC complex assembly and transport to the plasma membrane.

It is found in the apical cell membrane. It catalyses the reaction Na(+)(in) = Na(+)(out). Originally identified and characterized by its inhibition by the diuretic drug amiloride. Functionally, this is one of the three pore-forming subunits of the heterotrimeric epithelial sodium channel (ENaC), a critical regulator of sodium balance and fluid homeostasis. ENaC operates in epithelial tissues, where it mediates the electrodiffusion of sodium ions from extracellular fluid through the apical membrane of cells, with water following osmotically. It plays a key role in maintaining sodium homeostasis through electrogenic sodium reabsorption in the kidneys. Additionally, ENaC is essential for airway surface liquid homeostasis, which is crucial for proper mucus clearance. The protein is Epithelial sodium channel subunit gamma of Rattus norvegicus (Rat).